We begin with the raw amino-acid sequence, 119 residues long: Protein TusC (119 aa).

It belongs to the DsrF/TusC family. In terms of assembly, heterohexamer, formed by a dimer of trimers. The hexameric TusBCD complex contains 2 copies each of TusB, TusC and TusD. The TusBCD complex interacts with TusE.

The protein resides in the cytoplasm. In terms of biological role, part of a sulfur-relay system required for 2-thiolation of 5-methylaminomethyl-2-thiouridine (mnm(5)s(2)U) at tRNA wobble positions. The protein is Protein TusC of Buchnera aphidicola subsp. Acyrthosiphon pisum (strain APS) (Acyrthosiphon pisum symbiotic bacterium).